Reading from the N-terminus, the 599-residue chain is Putative sensor histidine kinase NtrY-like (599 aa).

Transmembrane regions (helical) follow at residues 17-37 (VLIF…FYVI), 44-64 (FSTI…LGVL), 85-105 (IVIA…VFSV), and 285-305 (IMFI…GVIF). One can recognise an HAMP domain in the interval 307 to 361 (AKIVKPIKKLVTATDKVKDGDLTVQVPENEVDKDEIGTLYAAFNRMIKQLSRQQR). One can recognise a Histidine kinase domain in the interval 378 to 589 (KVAHEIKNPL…IIDIKFDLKK (212 aa)). Histidine 381 is modified (phosphohistidine; by autocatalysis).

It localises to the cell membrane. It carries out the reaction ATP + protein L-histidine = ADP + protein N-phospho-L-histidine.. In terms of biological role, member of the two-component regulatory system RF_0427/RF_0895. In Rickettsia felis (strain ATCC VR-1525 / URRWXCal2) (Rickettsia azadi), this protein is Putative sensor histidine kinase NtrY-like.